A 677-amino-acid chain; its full sequence is DNA-directed RNA polymerase subunit beta' (677 aa).

The Zn(2+) site is built by C69, C71, C87, and C90. Residues D489, D491, and D493 each coordinate Mg(2+).

This sequence belongs to the RNA polymerase beta' chain family. RpoC1 subfamily. In plastids the minimal PEP RNA polymerase catalytic core is composed of four subunits: alpha, beta, beta', and beta''. When a (nuclear-encoded) sigma factor is associated with the core the holoenzyme is formed, which can initiate transcription. Mg(2+) is required as a cofactor. It depends on Zn(2+) as a cofactor.

It localises to the plastid. Its subcellular location is the chloroplast. It carries out the reaction RNA(n) + a ribonucleoside 5'-triphosphate = RNA(n+1) + diphosphate. In terms of biological role, DNA-dependent RNA polymerase catalyzes the transcription of DNA into RNA using the four ribonucleoside triphosphates as substrates. This chain is DNA-directed RNA polymerase subunit beta', found in Daucus carota (Wild carrot).